The following is a 580-amino-acid chain: Multidrug resistance-like ATP-binding protein MdlB (580 aa).

In terms of domain architecture, ABC transmembrane type-1 spans 25-310 (LILAFIFLLS…ITIQQSVLQQ (286 aa)). Transmembrane regions (helical) follow at residues 26–46 (ILAFIFLLSGSTSEVLGPILI), 61–81 (LLIILTIITLFIILQILSVFL), 150–170 (IILIFIILFAMFTLEWHMALV), 173–193 (FILPLVITIMLVYQYYSTPLL), 247–267 (LDGFLLRPLLSLLSSMILCNF), and 268–288 (MFLFSFFPVGAFEVGVLYAFI). The ABC transporter domain occupies 341 to 575 (INIQNVSFYH…KSCYYKMYKF (235 aa)). 375 to 382 (GHTGSGKS) serves as a coordination point for ATP.

It belongs to the ABC transporter superfamily. Drug exporter-2 (TC 3.A.1.117) family.

It localises to the cell membrane. It carries out the reaction ATP + H2O + xenobioticSide 1 = ADP + phosphate + xenobioticSide 2.. This is Multidrug resistance-like ATP-binding protein MdlB (mdlB) from Buchnera aphidicola subsp. Acyrthosiphon pisum (strain APS) (Acyrthosiphon pisum symbiotic bacterium).